The following is a 345-amino-acid chain: NADH-quinone oxidoreductase subunit H (345 aa).

8 helical membrane passes run 9–29, 82–102, 108–128, 154–174, 183–203, 241–261, 282–302, and 325–345; these read ALGAFLVINAMLLSASLLVFA, VVMVVIAMTTASLIPFAEGVV, VGVIMLLALTSISVYGVTLAG, MGLAVISVVLIAGSLNFMEIV, LLGWNAVRNPIGCLIFIVTAF, YVNWFIASFFIVTLFFGGYLV, LLQFVSLMLKVSFFSFVFIWV, and IALANAILIALGVVLFGAVGL.

Belongs to the complex I subunit 1 family. As to quaternary structure, NDH-1 is composed of 14 different subunits. Subunits NuoA, H, J, K, L, M, N constitute the membrane sector of the complex.

The protein resides in the cell inner membrane. It carries out the reaction a quinone + NADH + 5 H(+)(in) = a quinol + NAD(+) + 4 H(+)(out). In terms of biological role, NDH-1 shuttles electrons from NADH, via FMN and iron-sulfur (Fe-S) centers, to quinones in the respiratory chain. The immediate electron acceptor for the enzyme in this species is believed to be ubiquinone. Couples the redox reaction to proton translocation (for every two electrons transferred, four hydrogen ions are translocated across the cytoplasmic membrane), and thus conserves the redox energy in a proton gradient. This subunit may bind ubiquinone. The chain is NADH-quinone oxidoreductase subunit H from Salinibacter ruber (strain DSM 13855 / M31).